The chain runs to 118 residues: Phospholipase A2 'basic' (118 aa).

Disulfide bonds link Cys11-Cys70, Cys26-Cys117, Cys28-Cys44, Cys43-Cys98, Cys50-Cys91, Cys59-Cys84, and Cys77-Cys89. Residues Tyr27, Gly29, and Gly31 each contribute to the Ca(2+) site. The active site involves His47. Asp48 lines the Ca(2+) pocket. The Coagulation factor Xa binding motif signature appears at 52–69 (EKAGKMGCWPYLTLYKYK). Asp92 is a catalytic residue.

It belongs to the phospholipase A2 family. Group I subfamily. D49 sub-subfamily. Requires Ca(2+) as cofactor. Expressed by the venom gland.

The protein resides in the secreted. The enzyme catalyses a 1,2-diacyl-sn-glycero-3-phosphocholine + H2O = a 1-acyl-sn-glycero-3-phosphocholine + a fatty acid + H(+). Snake venom phospholipase A2 (PLA2) that shows strong anticoagulant activity. Binds directly with the coagulation factor FXa (F10) and blocks the formation of the prothombinase complex. Acts by a nonenzymatic mechanism. Also inhibits the complex composed of tissue factor (F3) and coagulation factor VIIa (F7) (TF-VIIa complex) by both enzymatic and nonenzymatic mechanisms. PLA2 catalyzes the calcium-dependent hydrolysis of the 2-acyl groups in 3-sn-phosphoglycerides. This chain is Phospholipase A2 'basic', found in Naja nigricollis (Black-necked spitting cobra).